A 136-amino-acid polypeptide reads, in one-letter code: Large-conductance mechanosensitive channel (136 aa).

2 consecutive transmembrane segments (helical) span residues 9–29 and 79–99; these read AFAS…GAAF and IQTI…LKAI.

This sequence belongs to the MscL family. As to quaternary structure, homopentamer.

It is found in the cell inner membrane. Functionally, channel that opens in response to stretch forces in the membrane lipid bilayer. May participate in the regulation of osmotic pressure changes within the cell. The polypeptide is Large-conductance mechanosensitive channel (Shewanella sp. (strain ANA-3)).